The sequence spans 269 residues: Undecaprenyl-diphosphatase (269 aa).

8 helical membrane passes run 3–23 (LLIK…LPIS), 41–61 (FATM…VFYY), 78–98 (GFNL…IGLL), 107–127 (LFSP…MIVI), 148–167 (SLLI…SRSA), 184–204 (AEFS…LSLL), 213–233 (LEWQ…LFVV), and 248–268 (FAYY…EKIV).

It belongs to the UppP family.

Its subcellular location is the cell membrane. The catalysed reaction is di-trans,octa-cis-undecaprenyl diphosphate + H2O = di-trans,octa-cis-undecaprenyl phosphate + phosphate + H(+). In terms of biological role, catalyzes the dephosphorylation of undecaprenyl diphosphate (UPP). Confers resistance to bacitracin. The polypeptide is Undecaprenyl-diphosphatase (Thermoanaerobacter sp. (strain X514)).